Reading from the N-terminus, the 213-residue chain is Thymidylate kinase (213 aa).

10 to 17 (GIDGCGKT) lines the ATP pocket.

The protein belongs to the thymidylate kinase family.

The enzyme catalyses dTMP + ATP = dTDP + ADP. Its function is as follows. Phosphorylation of dTMP to form dTDP in both de novo and salvage pathways of dTTP synthesis. The protein is Thymidylate kinase of Synechococcus sp. (strain WH7803).